The chain runs to 351 residues: MINCGDVYKVIEAMVPLYVALILGYGSVKWWHIFTRDQCDAINRLVCYFTLPLFTIEFTAHVDPFNMNYRFIAADVLSKVIIVTVLALWAKYSNKGSYCWSITSFSLCTLTNSLVVGVPLAKAMYGQQAVDLVVQSSVFQAIVWLTLLLFVLEFRKAGFSSNNISDVQVDNINIESGKRETVVVGEKSFLEVMSLVWLKLATNPNCYSCILGIAWAFISNRWHLELPGILEGSILIMSKAGTGTAMFNMGIFMALQEKLIVCGTSLTVMGMVLKFIAGPAAMAIGSIVLGLHGDVLRVAIIQAALPQSITSFIFAKEYGLHADVLSTAVIFGMLVSLPVLVAYYAALEFIH.

10 helical membrane-spanning segments follow: residues Val7–Ser27, Cys39–Thr59, Phe71–Lys91, Trp100–Leu120, Leu132–Leu152, Ile210–Leu230, Ile234–Ala254, Met271–Leu291, Val295–Ala315, and Val329–Phe349.

This sequence belongs to the auxin efflux carrier (TC 2.A.69.1) family. Expressed in elongating parts of hypocotyl, cotyledon vasculature and guard cells. Detected in root pericycle and root tip and at later developmental stages in leaves, stems and flowers. Expressed in veins of mature leaves.

It is found in the endoplasmic reticulum membrane. The protein localises to the cell membrane. In terms of biological role, auxin transporter regulating intracellular auxin homeostasis and metabolism. Mediates the auxin transport from the cytosol into the lumen of the endoplasmic reticulum. May also act as an auxin efflux carrier when located to the cell membrane. PIN5 and PIN8 may have an antagonistic/compensatory activity. Involved in unfolded protein response (UPR) activation. Involved in the control of vein patterning. Promotes vein formation. PIN5, PIN6, and PIN8 control vein network geometry, but they are expressed in mutually exclusive domains of leaf vascular cells. The protein is Auxin efflux carrier component 5 of Arabidopsis thaliana (Mouse-ear cress).